Reading from the N-terminus, the 214-residue chain is Thiamine pyrophosphokinase (214 aa).

Belongs to the thiamine pyrophosphokinase family.

It carries out the reaction thiamine + ATP = thiamine diphosphate + AMP + H(+). Its pathway is cofactor biosynthesis; thiamine diphosphate biosynthesis; thiamine diphosphate from thiamine: step 1/1. In terms of biological role, catalyzes the ATP-dependent phosphorylation of thiamine to thiamine pyrophosphate. Is involved in thiamine salvage. The protein is Thiamine pyrophosphokinase of Bacillus subtilis (strain 168).